The primary structure comprises 992 residues: Ribosome quality control complex subunit NEMF homolog (992 aa).

Residues 214–231 (KETTEETPEAEDKPEKGG) show a composition bias toward basic and acidic residues. The segment at 214–245 (KETTEETPEAEDKPEKGGKKQRKKQQNTKLEQ) is disordered. Coiled coils occupy residues 331-370 (STQE…LTKV) and 481-514 (SAAQ…VRTI). Disordered stretches follow at residues 688–715 (EVEH…NTEI) and 771–895 (GPSR…GDVD). Residues 702–715 (SNINLSEPSSNTEI) are compositionally biased toward polar residues. Residues 774 to 839 (RKKQVSAKKT…QDDEEREIRM (66 aa)) are a coiled coil. Basic and acidic residues predominate over residues 782 to 796 (KTKEDKARAKQEAAK). Basic residues predominate over residues 814-825 (RGQKGKLKKMKQ). The segment covering 845–874 (SGKEKPQASADKVVEKSESTKEYVKPEKSA) has biased composition (basic and acidic residues).

The protein belongs to the NEMF family. As to quaternary structure, component of the ribosome quality control complex (RQC), composed of at least the E3 ubiquitin ligase l(3)76BDr/LTN1 and Clbn/NEMF associated with the 60S ribosomal subunit. The complex probably also contains TCF25 as well as TER94/VCP and its ubiquitin-binding cofactors. Interacts (via its C-terminus) with pros (via its homeobox). Interacts (via its N-terminus) with emb. In terms of tissue distribution, expressed in enterocytes (at protein level).

The protein localises to the nucleus. The protein resides in the cytoplasm. It localises to the mitochondrion outer membrane. Functionally, key component of the ribosome quality control complex (RQC), a ribosome-associated complex that mediates the extraction of incompletely synthesized nascent chains from stalled ribosomes as well as their ubiquitin-mediated proteasomal degradation. Thereby, frees 60S subunit ribosomes from the stalled translation complex and prevents the accumulation of nascent polypeptide chains that are potentially toxic for the cell. Within the RQC complex, Clbn/NEMF specifically binds stalled 60S ribosomal subunits by recognizing an exposed, nascent chain-conjugated tRNA moiety. Following binding to stalled 60S ribosomal subunits, Clbn/NEMF mediates CAT tailing by recruiting alanine-charged tRNA to the A-site and directing the elongation of stalled nascent chains independently of mRNA or 40S subunits, leading to non-templated C-terminal alanine extensions (CAT tails). On mitochondrial surface, plays a role in mitochondrial-stress induced translational termination impairment and protein carboxyl terminal extension (MISTERMINATE). Plays a role in regulating nuclear transport possibly through directly binding to both emb and cargo proteins. Plays a role in the regulation of G1-to-S cell cycle transition. Regulates S phase checkpoint by antagonizing E2F1 activity. Together with hid and tefu/ATM, plays a role in DNA damage-induced apoptosis through both p53-dependent and -independent activity. Plays an essential role in the regulation of mitochondrial structure and redox state in enterocytes which is essential for the control of intestinal stem cells proliferation and intestinal homeostasis. The chain is Ribosome quality control complex subunit NEMF homolog from Drosophila melanogaster (Fruit fly).